The following is a 343-amino-acid chain: ATP-dependent (S)-NAD(P)H-hydrate dehydratase (343 aa).

The N-terminal 42 residues, Met1 to Ala42, are a transit peptide targeting the mitochondrion. Residues Leu49–Leu340 form the YjeF C-terminal domain. Lys63 carries the N6-acetyllysine modification. Tyr81 carries the post-translational modification Phosphotyrosine. (6S)-NADPHX-binding positions include Gly149 and Asn202 to Arg208. A Phosphoserine modification is found at Ser216. ATP contacts are provided by residues Lys242–Asp246 and Gly261–Gly270. Asp271 is a binding site for (6S)-NADPHX.

This sequence belongs to the NnrD/CARKD family. The cofactor is Mg(2+).

The protein resides in the mitochondrion. It carries out the reaction (6S)-NADHX + ATP = ADP + phosphate + NADH + H(+). The catalysed reaction is (6S)-NADPHX + ATP = ADP + phosphate + NADPH + H(+). Catalyzes the dehydration of the S-form of NAD(P)HX at the expense of ATP, which is converted to ADP. Together with NAD(P)HX epimerase, which catalyzes the epimerization of the S- and R-forms, the enzyme allows the repair of both epimers of NAD(P)HX, a damaged form of NAD(P)H that is a result of enzymatic or heat-dependent hydration. This chain is ATP-dependent (S)-NAD(P)H-hydrate dehydratase, found in Mus musculus (Mouse).